Here is a 428-residue protein sequence, read N- to C-terminus: 3-phosphoshikimate 1-carboxyvinyltransferase (428 aa).

3 residues coordinate 3-phosphoshikimate: Lys-21, Ser-22, and Arg-26. Lys-21 is a binding site for phosphoenolpyruvate. Gly-91 and Arg-119 together coordinate phosphoenolpyruvate. 3-phosphoshikimate is bound by residues Ser-164, Gln-166, Asp-313, and Lys-340. Gln-166 serves as a coordination point for phosphoenolpyruvate. Catalysis depends on Asp-313, which acts as the Proton acceptor. Phosphoenolpyruvate contacts are provided by Arg-344 and Arg-386.

Belongs to the EPSP synthase family. Monomer.

The protein resides in the cytoplasm. It catalyses the reaction 3-phosphoshikimate + phosphoenolpyruvate = 5-O-(1-carboxyvinyl)-3-phosphoshikimate + phosphate. It participates in metabolic intermediate biosynthesis; chorismate biosynthesis; chorismate from D-erythrose 4-phosphate and phosphoenolpyruvate: step 6/7. Its function is as follows. Catalyzes the transfer of the enolpyruvyl moiety of phosphoenolpyruvate (PEP) to the 5-hydroxyl of shikimate-3-phosphate (S3P) to produce enolpyruvyl shikimate-3-phosphate and inorganic phosphate. This is 3-phosphoshikimate 1-carboxyvinyltransferase from Campylobacter jejuni subsp. jejuni serotype O:2 (strain ATCC 700819 / NCTC 11168).